The chain runs to 134 residues: Small ribosomal subunit protein uS11 (134 aa).

Belongs to the universal ribosomal protein uS11 family. In terms of assembly, part of the 30S ribosomal subunit. Interacts with proteins S7 and S18. Binds to IF-3.

In terms of biological role, located on the platform of the 30S subunit, it bridges several disparate RNA helices of the 16S rRNA. Forms part of the Shine-Dalgarno cleft in the 70S ribosome. This is Small ribosomal subunit protein uS11 from Delftia acidovorans (strain DSM 14801 / SPH-1).